The sequence spans 20 residues: Brevinin-1ITa (20 aa).

A Methionine sulfoxide; partial modification is found at Met-8. Cysteines 14 and 20 form a disulfide.

Belongs to the frog skin active peptide (FSAP) family. Brevinin subfamily. In terms of tissue distribution, expressed by the skin glands.

It is found in the secreted. Functionally, antimicrobial peptide active against Gram-positive bacterium S.epidermidis ATCC 12228 (MIC=4 uM), against Gram-negative bacterium E.coli ATCC 25922 (MIC=64 uM) and against yeast C.parapsilosis ATCC 22019 (MIC=16 uM). Has hemolytic and cytotoxic activity. The protein is Brevinin-1ITa of Rana italica (Italian stream frog).